Here is a 563-residue protein sequence, read N- to C-terminus: Dihydroxy-acid dehydratase (563 aa).

Asp78 provides a ligand contact to Mg(2+). A [2Fe-2S] cluster-binding site is contributed by Cys119. The Mg(2+) site is built by Asp120 and Lys121. An N6-carboxylysine modification is found at Lys121. Position 191 (Cys191) interacts with [2Fe-2S] cluster. Glu442 contacts Mg(2+). Ser468 (proton acceptor) is an active-site residue.

Belongs to the IlvD/Edd family. As to quaternary structure, homodimer. [2Fe-2S] cluster is required as a cofactor. Mg(2+) serves as cofactor.

It catalyses the reaction (2R)-2,3-dihydroxy-3-methylbutanoate = 3-methyl-2-oxobutanoate + H2O. The catalysed reaction is (2R,3R)-2,3-dihydroxy-3-methylpentanoate = (S)-3-methyl-2-oxopentanoate + H2O. It functions in the pathway amino-acid biosynthesis; L-isoleucine biosynthesis; L-isoleucine from 2-oxobutanoate: step 3/4. It participates in amino-acid biosynthesis; L-valine biosynthesis; L-valine from pyruvate: step 3/4. Functionally, functions in the biosynthesis of branched-chain amino acids. Catalyzes the dehydration of (2R,3R)-2,3-dihydroxy-3-methylpentanoate (2,3-dihydroxy-3-methylvalerate) into 2-oxo-3-methylpentanoate (2-oxo-3-methylvalerate) and of (2R)-2,3-dihydroxy-3-methylbutanoate (2,3-dihydroxyisovalerate) into 2-oxo-3-methylbutanoate (2-oxoisovalerate), the penultimate precursor to L-isoleucine and L-valine, respectively. The protein is Dihydroxy-acid dehydratase of Desulfitobacterium hafniense (strain DSM 10664 / DCB-2).